The following is a 595-amino-acid chain: E3 ubiquitin-protein ligase synoviolin B (595 aa).

The helical transmembrane segment at 1–19 (MTGASLALTASVVAHAYYL) threads the bilayer. At 20 to 35 (KNQFYPTVVYLTKSSP) the chain is on the lumenal side. Residues 36–56 (SMAILYIQAFVLVFLLGKFMG) traverse the membrane as a helical segment. The Cytoplasmic portion of the chain corresponds to 57–92 (KVFFGQLRAAEMEHLLERSWYAVTETCLAFTVFRDD). A helical transmembrane segment spans residues 93–113 (FSPRFVALFTLLLFLKCFHWL). Topologically, residues 114–129 (AEDRVDFMERSPNISW) are lumenal. The chain crosses the membrane as a helical span at residues 130 to 150 (LFHFRILALMLLLGVLDAFFV). At 151–163 (SHAYNSLVTRGAS) the chain is on the cytoplasmic side. A helical transmembrane segment spans residues 164–184 (VQLVFGFEYAILMTMILAVFI). Topologically, residues 185–218 (KYILHSVDLQSENPWDNKAVYMLYTELFTGFIKV) are lumenal. A helical transmembrane segment spans residues 219–239 (LLYMAFMTIMVKVHTFPLFAI). The tract at residues 230–264 (KVHTFPLFAIRPMYLAMRQFKKAVTDAVMSRRAIR) is interaction with p53/TP53. The Cytoplasmic segment spans residues 240 to 595 (RPMYLAMRQF…LQKLETTDSQ (356 aa)). Cys285, Cys288, Cys301, His303, His306, Cys309, Cys320, and Cys323 together coordinate Zn(2+). An RING-type; atypical zinc finger spans residues 285–324 (CIICREEMVSGAKRLPCNHIFHTSCLRSWFQRQQTCPTCR). Residues 335–353 (QPQTPAEQQNQHQAQQQPT) are compositionally biased toward low complexity. Disordered stretches follow at residues 335 to 370 (QPQT…LPPF) and 386 to 426 (PVPG…PGAA). A compositionally biased stretch (pro residues) spans 354–370 (PVVPPQPNFPPGMLPPF). The segment covering 390-408 (APVGNPPDEANPGSSSGSS) has biased composition (low complexity). Residues 463 to 494 (EELRAMEGHERQNLEARLQCLQNIHTLLDAAM) are a coiled coil. The tract at residues 509–595 (PPQPPVSSSS…LQKLETTDSQ (87 aa)) is disordered. Low complexity predominate over residues 514–552 (VSSSSSSSASASTEPTTSSVSEPVIDTSSIVTTDSSQQS).

This sequence belongs to the HRD1 family. Homodimer.

It localises to the endoplasmic reticulum membrane. It catalyses the reaction S-ubiquitinyl-[E2 ubiquitin-conjugating enzyme]-L-cysteine + [acceptor protein]-L-lysine = [E2 ubiquitin-conjugating enzyme]-L-cysteine + N(6)-ubiquitinyl-[acceptor protein]-L-lysine.. The protein operates within protein modification; protein ubiquitination. Its function is as follows. E3 ubiquitin-protein ligase which accepts ubiquitin specifically from endoplasmic reticulum-associated UBC7 E2 ligase and transfers it to substrates, promoting their degradation. Component of the endoplasmic reticulum quality control (ERQC) system also called ER-associated degradation (ERAD) involved in ubiquitin-dependent degradation of misfolded endoplasmic reticulum proteins. Also promotes the degradation of normal but naturally short-lived proteins. Protects cells from ER stress-induced apoptosis. Sequesters p53 in the cytoplasm and promotes its degradation, thereby negatively regulating its biological function in transcription, cell cycle regulation and apoptosis. The sequence is that of E3 ubiquitin-protein ligase synoviolin B (syvn1-b) from Xenopus laevis (African clawed frog).